The following is a 379-amino-acid chain: Oxidized polyvinyl alcohol hydrolase (379 aa).

Residues 1–23 (MNQSLGVLRLTRGVIALALASVA) form the signal peptide. Residues S203 and S309 each act as charge relay system in the active site.

It belongs to the peptidase S9A family. As to quaternary structure, monomer.

The catalysed reaction is nonane-4,6-dione + H2O = pentan-2-one + butanoate + H(+). In terms of biological role, catalyzes the hydrolysis of 4,6-nonanedione, a beta-diketone compound. Also mediates hydrolysis of oxidized polyvinyl alcohol (PVA) in the second step in the degradation of polyvinyl alcohol. Not active toward the monoketone structure. The protein is Oxidized polyvinyl alcohol hydrolase (pvaB) of Pseudomonas sp.